The following is a 394-amino-acid chain: Acetate kinase (394 aa).

N8 lines the Mg(2+) pocket. Position 15 (K15) interacts with ATP. R86 is a binding site for substrate. The active-site Proton donor/acceptor is the D143. ATP-binding positions include H201 to G205, D276 to R278, and G324 to N328. E378 contributes to the Mg(2+) binding site.

It belongs to the acetokinase family. In terms of assembly, homodimer. The cofactor is Mg(2+). It depends on Mn(2+) as a cofactor.

Its subcellular location is the cytoplasm. The catalysed reaction is acetate + ATP = acetyl phosphate + ADP. It functions in the pathway metabolic intermediate biosynthesis; acetyl-CoA biosynthesis; acetyl-CoA from acetate: step 1/2. Catalyzes the formation of acetyl phosphate from acetate and ATP. Can also catalyze the reverse reaction. The chain is Acetate kinase from Dichelobacter nodosus (strain VCS1703A).